A 386-amino-acid polypeptide reads, in one-letter code: Succinate--CoA ligase [ADP-forming] subunit beta (386 aa).

Residues 9–244 (KDLLTAYQLP…PSQENIRDVL (236 aa)) enclose the ATP-grasp domain. ATP contacts are provided by residues K46, 53-55 (GRG), V102, and E107. Mg(2+)-binding residues include N199 and D213. Residues N264 and 321–323 (GIM) contribute to the substrate site.

This sequence belongs to the succinate/malate CoA ligase beta subunit family. As to quaternary structure, heterotetramer of two alpha and two beta subunits. Requires Mg(2+) as cofactor.

It catalyses the reaction succinate + ATP + CoA = succinyl-CoA + ADP + phosphate. It carries out the reaction GTP + succinate + CoA = succinyl-CoA + GDP + phosphate. Its pathway is carbohydrate metabolism; tricarboxylic acid cycle; succinate from succinyl-CoA (ligase route): step 1/1. Functionally, succinyl-CoA synthetase functions in the citric acid cycle (TCA), coupling the hydrolysis of succinyl-CoA to the synthesis of either ATP or GTP and thus represents the only step of substrate-level phosphorylation in the TCA. The beta subunit provides nucleotide specificity of the enzyme and binds the substrate succinate, while the binding sites for coenzyme A and phosphate are found in the alpha subunit. The polypeptide is Succinate--CoA ligase [ADP-forming] subunit beta (Chlamydia trachomatis serovar A (strain ATCC VR-571B / DSM 19440 / HAR-13)).